We begin with the raw amino-acid sequence, 231 residues long: Small ribosomal subunit protein uS3 (231 aa).

The 69-residue stretch at 39–107 folds into the KH type-2 domain; it reads IRKFIMKTLP…GVSLNIVEIR (69 aa).

Belongs to the universal ribosomal protein uS3 family. Part of the 30S ribosomal subunit. Forms a tight complex with proteins S10 and S14.

In terms of biological role, binds the lower part of the 30S subunit head. Binds mRNA in the 70S ribosome, positioning it for translation. The polypeptide is Small ribosomal subunit protein uS3 (Zymomonas mobilis subsp. mobilis (strain ATCC 31821 / ZM4 / CP4)).